Here is a 78-residue protein sequence, read N- to C-terminus: Large ribosomal subunit protein eL20 (78 aa).

The protein belongs to the eukaryotic ribosomal protein eL20 family. Part of the 50S ribosomal subunit. Binds 23S rRNA.

The chain is Large ribosomal subunit protein eL20 from Pyrobaculum neutrophilum (strain DSM 2338 / JCM 9278 / NBRC 100436 / V24Sta) (Thermoproteus neutrophilus).